A 561-amino-acid chain; its full sequence is Phosphoinositide phospholipase C 1 (561 aa).

The EF-hand domain occupies E21–E54. The 145-residue stretch at Q105–K249 folds into the PI-PLC X-box domain. Residues H120 and H166 contribute to the active site. The span at Q256 to D266 shows a compositional bias: polar residues. Positions Q256–D285 are disordered. Over residues E267–D276 the composition is skewed to basic and acidic residues. One can recognise a PI-PLC Y-box domain in the interval R294–L410. The 128-residue stretch at P414–D541 folds into the C2 domain. Ca(2+)-binding residues include D452, D458, D510, D512, and D518.

It depends on Ca(2+) as a cofactor. Expressed in stems, leaves, roots, flowers and siliques. Predominant in the vascular tissues of roots and leaves.

The protein localises to the cell membrane. The enzyme catalyses a 1,2-diacyl-sn-glycero-3-phospho-(1D-myo-inositol-4,5-bisphosphate) + H2O = 1D-myo-inositol 1,4,5-trisphosphate + a 1,2-diacyl-sn-glycerol + H(+). Functionally, the production of the second messenger molecules diacylglycerol (DAG) and inositol 1,4,5-trisphosphate (IP3) is mediated by activated phosphatidylinositol-specific phospholipase C enzymes. Required for secondary responses to abscisic acid signals. The sequence is that of Phosphoinositide phospholipase C 1 (PLC1) from Arabidopsis thaliana (Mouse-ear cress).